A 197-amino-acid polypeptide reads, in one-letter code: Probable GTP-binding protein EngB (197 aa).

Residues aspartate 22–isoleucine 194 enclose the EngB-type G domain. GTP contacts are provided by residues glycine 30–serine 37, glycine 57–leucine 61, aspartate 75–glycine 78, threonine 142–aspartate 145, and phenylalanine 173–threonine 175. Positions 37 and 59 each coordinate Mg(2+).

This sequence belongs to the TRAFAC class TrmE-Era-EngA-EngB-Septin-like GTPase superfamily. EngB GTPase family. The cofactor is Mg(2+).

Its function is as follows. Necessary for normal cell division and for the maintenance of normal septation. This Desulfosudis oleivorans (strain DSM 6200 / JCM 39069 / Hxd3) (Desulfococcus oleovorans) protein is Probable GTP-binding protein EngB.